Consider the following 307-residue polypeptide: Protoheme IX farnesyltransferase (307 aa).

The next 8 helical transmembrane spans lie at 32–52 (MGIV…ALHF), 65–85 (FFTI…NNYI), 108–128 (PGFA…FLLL), 131–151 (PMAV…YSLW), 158–178 (LNTV…WAAI), 186–206 (IAWM…LALA), 251–271 (LGIT…VLGF), and 287–307 (FVYS…VTFF).

The protein belongs to the UbiA prenyltransferase family. Protoheme IX farnesyltransferase subfamily. As to quaternary structure, interacts with CtaA.

The protein localises to the cell membrane. It carries out the reaction heme b + (2E,6E)-farnesyl diphosphate + H2O = Fe(II)-heme o + diphosphate. Its pathway is porphyrin-containing compound metabolism; heme O biosynthesis; heme O from protoheme: step 1/1. In terms of biological role, converts heme B (protoheme IX) to heme O by substitution of the vinyl group on carbon 2 of heme B porphyrin ring with a hydroxyethyl farnesyl side group. In Bacillus anthracis (strain A0248), this protein is Protoheme IX farnesyltransferase.